A 378-amino-acid polypeptide reads, in one-letter code: Chaperone protein DnaJ 2 (378 aa).

In terms of domain architecture, J spans 4–68; sequence DYYAVLGVRR…QKKQVYDLGG (65 aa). The CR-type zinc finger occupies 130 to 212; the sequence is GTTKDIQVDT…CAGDGRVRSR (83 aa). Zn(2+) is bound by residues C143, C146, C160, C163, C186, C189, C200, and C203. CXXCXGXG motif repeat units follow at residues 143 to 150, 160 to 167, 186 to 193, and 200 to 207; these read CNTCNGEG, CDMCRGRG, CPQCQGFG, and CPECAGDG. Disordered regions lie at residues 297 to 319 and 351 to 378; these read RPGT…LRGG and RGEE…FNGR. Positions 358–367 are enriched in polar residues; sequence GQFQPGQQGL.

It belongs to the DnaJ family. In terms of assembly, homodimer. Zn(2+) is required as a cofactor.

It localises to the cytoplasm. Functionally, participates actively in the response to hyperosmotic and heat shock by preventing the aggregation of stress-denatured proteins and by disaggregating proteins, also in an autonomous, DnaK-independent fashion. Unfolded proteins bind initially to DnaJ; upon interaction with the DnaJ-bound protein, DnaK hydrolyzes its bound ATP, resulting in the formation of a stable complex. GrpE releases ADP from DnaK; ATP binding to DnaK triggers the release of the substrate protein, thus completing the reaction cycle. Several rounds of ATP-dependent interactions between DnaJ, DnaK and GrpE are required for fully efficient folding. Also involved, together with DnaK and GrpE, in the DNA replication of plasmids through activation of initiation proteins. The polypeptide is Chaperone protein DnaJ 2 (Streptomyces coelicolor (strain ATCC BAA-471 / A3(2) / M145)).